The following is a 97-amino-acid chain: Nuclear protein 2 (97 aa).

The tract at residues 76 to 97 (LLNGQRKRRQRQLHPKMRTRLT) is disordered. The span at 80–97 (QRKRRQRQLHPKMRTRLT) shows a compositional bias: basic residues.

Belongs to the NUPR family.

The protein resides in the nucleus. Its function is as follows. Acts as a transcriptional repressor by inhibiting gene expression at the NUPR1 promoter in a p53/TP53-dependent manner in cancer cells. Involved in the G1 cell cycle arrest, and in a decrease in cell viability and cell proliferation. Plays a role as a negative regulator of the protumoral factor NUPR1. In Homo sapiens (Human), this protein is Nuclear protein 2.